We begin with the raw amino-acid sequence, 249 residues long: Phosphate import ATP-binding protein PstB 2 (249 aa).

Positions 4 to 244 constitute an ABC transporter domain; sequence IEVRDLDLFY…PKDKRTEDYI (241 aa). 36–43 contributes to the ATP binding site; the sequence is GPSGCGKS.

Belongs to the ABC transporter superfamily. Phosphate importer (TC 3.A.1.7) family. The complex is composed of two ATP-binding proteins (PstB), two transmembrane proteins (PstC and PstA) and a solute-binding protein (PstS).

It localises to the cell membrane. It carries out the reaction phosphate(out) + ATP + H2O = ADP + 2 phosphate(in) + H(+). Its function is as follows. Part of the ABC transporter complex PstSACB involved in phosphate import. Responsible for energy coupling to the transport system. The protein is Phosphate import ATP-binding protein PstB 2 of Caldanaerobacter subterraneus subsp. tengcongensis (strain DSM 15242 / JCM 11007 / NBRC 100824 / MB4) (Thermoanaerobacter tengcongensis).